An 804-amino-acid polypeptide reads, in one-letter code: Probable protein phosphatase 2C 18 (804 aa).

The chain crosses the membrane as a helical span at residues 19-39 (DASGPVLFWCVLIIFAVPDAI). Residues 129 to 434 (KYIVSSMQGL…ENTTVILVQF (306 aa)) enclose the PPM-type phosphatase domain. Residues D165, G166, Q384, and E425 each coordinate Mn(2+). 4 disordered regions span residues 460-509 (STSA…GGSA), 564-599 (DEVELDPNFRPKPQVRRAHDGPSPTPSEIEADLNAS), 623-653 (PLQGHDVSSTSTNPNTATDTGSGSRTGDDDV), and 675-804 (VDST…EGSP). Positions 468–499 (GSDSDTSATSDEGVDDTATAGTTTTGYEAGSS) are enriched in low complexity. A compositionally biased stretch (polar residues) spans 628–637 (DVSSTSTNPN). The segment covering 638-647 (TATDTGSGSR) has biased composition (low complexity). A compositionally biased stretch (polar residues) spans 713–734 (LVNNDTTVADNNASGVADSTTV). Low complexity predominate over residues 776–789 (DATATATASASAAV). Positions 790–804 (ADDEGTAPDDSEGSP) are enriched in acidic residues.

This sequence belongs to the PP2C family. Requires Mg(2+) as cofactor. The cofactor is Mn(2+).

The protein localises to the membrane. It catalyses the reaction O-phospho-L-seryl-[protein] + H2O = L-seryl-[protein] + phosphate. The catalysed reaction is O-phospho-L-threonyl-[protein] + H2O = L-threonyl-[protein] + phosphate. The chain is Probable protein phosphatase 2C 18 from Oryza sativa subsp. japonica (Rice).